The sequence spans 149 residues: 3-hydroxyacyl-[acyl-carrier-protein] dehydratase FabZ (149 aa).

Residue His47 is part of the active site.

The protein belongs to the thioester dehydratase family. FabZ subfamily.

The protein resides in the cytoplasm. The enzyme catalyses a (3R)-hydroxyacyl-[ACP] = a (2E)-enoyl-[ACP] + H2O. Functionally, involved in unsaturated fatty acids biosynthesis. Catalyzes the dehydration of short chain beta-hydroxyacyl-ACPs and long chain saturated and unsaturated beta-hydroxyacyl-ACPs. This chain is 3-hydroxyacyl-[acyl-carrier-protein] dehydratase FabZ, found in Thioalkalivibrio sulfidiphilus (strain HL-EbGR7).